A 118-amino-acid chain; its full sequence is D-dopachrome decarboxylase (118 aa).

Proline 2 is subject to N-acetylproline.

It belongs to the MIF family. In terms of assembly, homotrimer.

The protein resides in the cytoplasm. The catalysed reaction is D-dopachrome + H(+) = 5,6-dihydroxyindole + CO2. Its function is as follows. Tautomerization of D-dopachrome with decarboxylation to give 5,6-dihydroxyindole (DHI). This chain is D-dopachrome decarboxylase (ddt), found in Xenopus tropicalis (Western clawed frog).